Reading from the N-terminus, the 131-residue chain is Steroid Delta-isomerase (131 aa).

Y16 functions as the Proton donor in the catalytic mechanism. The active-site Proton acceptor is D40. D103 contributes to the substrate binding site.

Homodimer.

It catalyses the reaction a 3-oxo-Delta(5)-steroid = a 3-oxo-Delta(4)-steroid. The sequence is that of Steroid Delta-isomerase (ksi) from Pseudomonas putida (Arthrobacter siderocapsulatus).